The sequence spans 482 residues: Thymidine phosphorylase (482 aa).

The propeptide occupies 1–10 (MAALMTPGTG). The tract at residues 1–36 (MAALMTPGTGAPPAPGDFSGEGSQGLPDPSPEPKQL) is disordered. Residue T6 is modified to Phosphothreonine. Residues H116, R202, S217, and K221 each contribute to the substrate site. R-V-A-A-A-L-X(5,6)-L-G-R repeat units lie at residues 265 to 279 (RVAA…PLGR) and 329 to 342 (RVAA…ALGR). 2 R-A-L-X-X-A-L-V-L repeats span residues 393–401 (RALPLALVL) and 453–461 (RALQEALVL).

This sequence belongs to the thymidine/pyrimidine-nucleoside phosphorylase family. Homodimer.

It catalyses the reaction thymidine + phosphate = 2-deoxy-alpha-D-ribose 1-phosphate + thymine. Its pathway is pyrimidine metabolism; dTMP biosynthesis via salvage pathway; dTMP from thymine: step 1/2. Its function is as follows. May have a role in maintaining the integrity of the blood vessels. Has growth promoting activity on endothelial cells, angiogenic activity in vivo and chemotactic activity on endothelial cells in vitro. In terms of biological role, catalyzes the reversible phosphorolysis of thymidine. The produced molecules are then utilized as carbon and energy sources or in the rescue of pyrimidine bases for nucleotide synthesis. The chain is Thymidine phosphorylase from Homo sapiens (Human).